We begin with the raw amino-acid sequence, 96 residues long: Putative membrane protein insertion efficiency factor (96 aa).

This sequence belongs to the UPF0161 family.

Its subcellular location is the cell inner membrane. Its function is as follows. Could be involved in insertion of integral membrane proteins into the membrane. The chain is Putative membrane protein insertion efficiency factor from Borreliella afzelii (strain PKo) (Borrelia afzelii).